The sequence spans 564 residues: Bifunctional protein CrtB/UppS (564 aa).

Residue Asp-329 is part of the active site. Residue Asp-329 participates in Mg(2+) binding. Substrate is bound by residues 330 to 333 (GNRR), Trp-334, His-346, and 374 to 376 (STE). The Proton acceptor role is filled by Asn-377. Substrate-binding positions include Trp-378, Arg-380, Arg-497, and 502 to 504 (RIS). Residue Glu-515 coordinates Mg(2+).

This sequence in the N-terminal section; belongs to the phytoene/squalene synthase family. The protein in the C-terminal section; belongs to the UPP synthase family. Homodimer. Mg(2+) serves as cofactor.

It catalyses the reaction 2 (2E,6E,10E)-geranylgeranyl diphosphate = 15-cis-phytoene + 2 diphosphate. It participates in carotenoid biosynthesis; phytoene biosynthesis; all-trans-phytoene from geranylgeranyl diphosphate: step 1/1. Its function is as follows. Catalyzes the reaction from prephytoene diphosphate to phytoene. Catalyzes the condensation of isopentenyl diphosphate (IPP) with allylic pyrophosphates generating different type of terpenoids. In Streptomyces coelicolor (strain ATCC BAA-471 / A3(2) / M145), this protein is Bifunctional protein CrtB/UppS (crtB/uppS3).